The sequence spans 949 residues: Protein translocase subunit SecA (949 aa).

ATP contacts are provided by residues Gln87, 105–109 (GEGKT), and Asp524. Disordered regions lie at residues 852–876 (PPPGENGFSGGMQEISGPQGGSSGG) and 896–939 (LEFS…GSGK). Zn(2+) is bound by residues Cys933, Cys935, Cys944, and His945.

It belongs to the SecA family. As to quaternary structure, monomer and homodimer. Part of the essential Sec protein translocation apparatus which comprises SecA, SecYEG and auxiliary proteins SecDF-YajC and YidC. The cofactor is Zn(2+).

It is found in the cell inner membrane. It localises to the cytoplasm. It catalyses the reaction ATP + H2O + cellular proteinSide 1 = ADP + phosphate + cellular proteinSide 2.. Functionally, part of the Sec protein translocase complex. Interacts with the SecYEG preprotein conducting channel. Has a central role in coupling the hydrolysis of ATP to the transfer of proteins into and across the cell membrane, serving both as a receptor for the preprotein-SecB complex and as an ATP-driven molecular motor driving the stepwise translocation of polypeptide chains across the membrane. This Methylocella silvestris (strain DSM 15510 / CIP 108128 / LMG 27833 / NCIMB 13906 / BL2) protein is Protein translocase subunit SecA.